The following is a 570-amino-acid chain: MNRAVCQVALENDEREAKNTWRLVFRIAILLLTVMTLAISAAALAYSMEASTPGDLVSIPTAISRAEGKITSALGSNQDVVDRIYKQVALESPLALLNTESIIMNAITSLSYQINGAANNSGCGAPVHDPDYIGGIGKELIVDDTSDVTSFYPSAFQEHLNFIPAPTTGSGCTRIPSFDMSATHCYTHNVIFSGCRDHSHSHQYLALGVLRTSATGRVFFSTLRSINLDDTQNRKSCSVSATPLGCDMLCSKVTETEEEDYNSVIPTSMVHGRLGFDGQYHEKDLDVTTLFGDWVANYPGVGGGSFIDNRVWFPVYGGLKPSSPSDTGQEGRYVIYKRYNDTCPDEQDYQIRMAKSSYKPGRFGGKRVQQAILSIKVSTSLGEDPVLTIPPNTVTLMGAEGRVLTVGTSHFLYQRGSSYFSPALLYPMTVNNNTATLHSPYTFNAFTRPGSVPCQASARCPNSCVTGVYTDPYPLVFHRNHTLRGVFGTMLDDEQARLNLVSAVFDNISRSRITRVSSSRTKAAYTTSTCFKVVKTNKTYCLSIAEISNTLFGEFRIVPLLVEILKDDGV.

At 1–26 (MNRAVCQVALENDEREAKNTWRLVFR) the chain is on the intravirion side. Residues 27–48 (IAILLLTVMTLAISAAALAYSM) traverse the membrane as a helical segment. At 49–570 (EASTPGDLVS…LVEILKDDGV (522 aa)) the chain is on the virion surface side. N-linked (GlcNAc...) asparagine; by host glycosylation is present at N119. Residues 124–152 (GAPVHDPDYIGGIGKELIVDDTSDVTSFY) are important for interaction with fusion/F protein. Cystine bridges form between C172–C195, C185–C246, and C237–C250. The segment at 233–238 (NRKSCS) is involved in neuraminidase activity. N-linked (GlcNAc...) asparagine; by host glycosylation is found at N340 and N432. 2 disulfides stabilise this stretch: C343/C460 and C454/C464. 3 N-linked (GlcNAc...) asparagine; by host glycosylation sites follow: N480, N507, and N537. A disulfide bond links C530 and C541.

It belongs to the paramyxoviruses hemagglutinin-neuraminidase family. In terms of assembly, homotetramer; composed of disulfide-linked homodimers. Interacts with F protein trimer. Interacts with host CG-1B; this interaction inhibits viral adsorption and replication rather than internalization.

Its subcellular location is the virion membrane. It localises to the host cell membrane. It catalyses the reaction Hydrolysis of alpha-(2-&gt;3)-, alpha-(2-&gt;6)-, alpha-(2-&gt;8)- glycosidic linkages of terminal sialic acid residues in oligosaccharides, glycoproteins, glycolipids, colominic acid and synthetic substrates.. Its function is as follows. Mediates the viral entry into the host cell together with fusion/F protein. Attaches the virus to sialic acid-containing cell receptors and thereby initiates infection. Binding of HN protein to the receptor induces a conformational change that allows the F protein to trigger virion/cell membranes fusion. Neuraminidase activity ensures the efficient spread of the virus by dissociating the mature virions from the neuraminic acid containing glycoproteins. This Gallus gallus (Chicken) protein is Hemagglutinin-neuraminidase (HN).